The sequence spans 509 residues: ATP synthase subunit alpha (509 aa).

169-176 provides a ligand contact to ATP; that stretch reads GDRQTGKT.

Belongs to the ATPase alpha/beta chains family. F-type ATPases have 2 components, CF(1) - the catalytic core - and CF(0) - the membrane proton channel. CF(1) has five subunits: alpha(3), beta(3), gamma(1), delta(1), epsilon(1). CF(0) has three main subunits: a(1), b(2) and c(9-12). The alpha and beta chains form an alternating ring which encloses part of the gamma chain. CF(1) is attached to CF(0) by a central stalk formed by the gamma and epsilon chains, while a peripheral stalk is formed by the delta and b chains.

The protein resides in the cell inner membrane. It catalyses the reaction ATP + H2O + 4 H(+)(in) = ADP + phosphate + 5 H(+)(out). In terms of biological role, produces ATP from ADP in the presence of a proton gradient across the membrane. The alpha chain is a regulatory subunit. This is ATP synthase subunit alpha from Methylocella silvestris (strain DSM 15510 / CIP 108128 / LMG 27833 / NCIMB 13906 / BL2).